Reading from the N-terminus, the 291-residue chain is ATP synthase gamma chain (291 aa).

It belongs to the ATPase gamma chain family. As to quaternary structure, F-type ATPases have 2 components, CF(1) - the catalytic core - and CF(0) - the membrane proton channel. CF(1) has five subunits: alpha(3), beta(3), gamma(1), delta(1), epsilon(1). CF(0) has three main subunits: a, b and c.

It localises to the cell inner membrane. Functionally, produces ATP from ADP in the presence of a proton gradient across the membrane. The gamma chain is believed to be important in regulating ATPase activity and the flow of protons through the CF(0) complex. The protein is ATP synthase gamma chain of Syntrophus aciditrophicus (strain SB).